Reading from the N-terminus, the 111-residue chain is Ribosome-binding factor A (111 aa).

The protein belongs to the RbfA family. As to quaternary structure, monomer. Binds 30S ribosomal subunits, but not 50S ribosomal subunits or 70S ribosomes.

The protein localises to the cytoplasm. In terms of biological role, one of several proteins that assist in the late maturation steps of the functional core of the 30S ribosomal subunit. Associates with free 30S ribosomal subunits (but not with 30S subunits that are part of 70S ribosomes or polysomes). Required for efficient processing of 16S rRNA. May interact with the 5'-terminal helix region of 16S rRNA. The chain is Ribosome-binding factor A from Helicobacter acinonychis (strain Sheeba).